Here is a 71-residue protein sequence, read N- to C-terminus: Disintegrin halysin (71 aa).

Residues 1 to 71 enclose the Disintegrin domain; the sequence is EAGEECDCGS…ISAGCPRNPF (71 aa). 6 disulfides stabilise this stretch: Cys6–Cys21, Cys8–Cys16, Cys15–Cys38, Cys29–Cys35, Cys34–Cys59, and Cys47–Cys66. The short motif at 51–53 is the Cell attachment site element; it reads RGD.

The protein belongs to the venom metalloproteinase (M12B) family. P-II subfamily. P-IIa sub-subfamily. As to quaternary structure, monomer. As to expression, expressed by the venom gland.

It is found in the secreted. Its function is as follows. Inhibits fibrinogen interaction with platelets. Acts by binding to alpha-IIb/beta-3 (ITGA2B/ITGB3) on the platelet surface and inhibits aggregation induced by ADP, thrombin, platelet-activating factor and collagen. The protein is Disintegrin halysin of Gloydius blomhoffii (Mamushi).